A 557-amino-acid polypeptide reads, in one-letter code: Probable phenylalanine--tRNA ligase beta subunit (557 aa).

One can recognise a B5 domain in the interval 276–352 (MHNRSYVMGL…IAHGFNNFRR (77 aa)). The Mg(2+) site is built by Asp-330, Asp-336, Glu-339, and Asp-340.

The protein belongs to the phenylalanyl-tRNA synthetase beta subunit family. Type 2 subfamily. In terms of assembly, tetramer of two alpha and two beta subunits. It depends on Mg(2+) as a cofactor.

It localises to the cytoplasm. The catalysed reaction is tRNA(Phe) + L-phenylalanine + ATP = L-phenylalanyl-tRNA(Phe) + AMP + diphosphate + H(+). The polypeptide is Probable phenylalanine--tRNA ligase beta subunit (Encephalitozoon cuniculi (strain GB-M1) (Microsporidian parasite)).